A 678-amino-acid polypeptide reads, in one-letter code: Methionine--tRNA ligase (678 aa).

A 'HIGH' region motif is present at residues 14–24 (PYANGSIHLGH). Cys145, Cys148, Cys158, and Cys161 together coordinate Zn(2+). Positions 331 to 335 (KMSKS) match the 'KMSKS' region motif. Lys334 lines the ATP pocket. Positions 576–678 (AFAAVDLRIA…SGAKPGQRVK (103 aa)) constitute a tRNA-binding domain.

Belongs to the class-I aminoacyl-tRNA synthetase family. MetG type 1 subfamily. Homodimer. Requires Zn(2+) as cofactor.

It is found in the cytoplasm. It carries out the reaction tRNA(Met) + L-methionine + ATP = L-methionyl-tRNA(Met) + AMP + diphosphate. Functionally, is required not only for elongation of protein synthesis but also for the initiation of all mRNA translation through initiator tRNA(fMet) aminoacylation. The protein is Methionine--tRNA ligase of Pseudomonas aeruginosa (strain UCBPP-PA14).